Reading from the N-terminus, the 159-residue chain is Putative 4-hydroxy-4-methyl-2-oxoglutarate aldolase (159 aa).

Substrate-binding positions include 74–77 (GDNL) and R96. A divalent metal cation is bound at residue D97.

This sequence belongs to the class II aldolase/RraA-like family. As to quaternary structure, homotrimer. The cofactor is a divalent metal cation.

It carries out the reaction 4-hydroxy-4-methyl-2-oxoglutarate = 2 pyruvate. The catalysed reaction is oxaloacetate + H(+) = pyruvate + CO2. Catalyzes the aldol cleavage of 4-hydroxy-4-methyl-2-oxoglutarate (HMG) into 2 molecules of pyruvate. Also contains a secondary oxaloacetate (OAA) decarboxylase activity due to the common pyruvate enolate transition state formed following C-C bond cleavage in the retro-aldol and decarboxylation reactions. This is Putative 4-hydroxy-4-methyl-2-oxoglutarate aldolase from Bacillus anthracis.